A 412-amino-acid chain; its full sequence is Protein arginine N-methyltransferase 2 (412 aa).

In terms of domain architecture, RMT2 spans 190–412 (TAADPDTYLN…YYYHPKISFA (223 aa)). Residues Tyr197, Met227, 250–255 (FGMGII), 271–273 (EAH), 298–299 (WQ), and Asp319 each bind S-adenosyl-L-methionine.

This sequence belongs to the class I-like SAM-binding methyltransferase superfamily. RMT2 methyltransferase family. As to quaternary structure, monomer.

The protein localises to the cytoplasm. Its subcellular location is the nucleus. S-adenosyl-L-methionine-dependent protein-arginine N-methyltransferase that methylates the delta-nitrogen atom of arginine residues to form N5-methylarginine (type IV) in target proteins. Monomethylates ribosomal protein L12. The protein is Protein arginine N-methyltransferase 2 of Candida glabrata (strain ATCC 2001 / BCRC 20586 / JCM 3761 / NBRC 0622 / NRRL Y-65 / CBS 138) (Yeast).